The following is a 507-amino-acid chain: Cytochrome P450 monooxygenase ptmU (507 aa).

A helical transmembrane segment spans residues 4-24; sequence VNAWWVGGSLLLGIWAIVVFF. N-linked (GlcNAc...) asparagine glycosylation is found at Asn-98, Asn-202, and Asn-398. A heme-binding site is contributed by Cys-444.

The protein belongs to the cytochrome P450 family. It depends on heme as a cofactor.

It is found in the membrane. Its pathway is secondary metabolite biosynthesis. Cytochrome P450 monooxygenase; part of the gene cluster that mediates the biosynthesis of the indole diterpenes penitrems. The geranylgeranyl diphosphate (GGPP) synthase ptmG catalyzes the first step in penitrem biosynthesis via conversion of farnesyl pyrophosphate and isopentyl pyrophosphate into geranylgeranyl pyrophosphate (GGPP). Condensation of indole-3-glycerol phosphate with GGPP by the prenyl transferase ptmC then forms 3-geranylgeranylindole (3-GGI). Epoxidation by the FAD-dependent monooxygenase ptmM leads to a epoxidized-GGI that is substrate of the terpene cyclase ptmB for cyclization to yield paspaline. Paspaline is subsequently converted to 13-desoxypaxilline by the cytochrome P450 monooxygenase ptmP, the latter being then converted to paxilline by the cytochrome P450 monooxygenase ptmQ. Paxilline is converted to beta-paxitriol via C-10 ketoreduction by the short-chain dehydrogenase ptmH which can be monoprenylated at the C-20 by the indole diterpene prenyltransferase ptmD. A two-step elimination (acetylation and elimination) process performed by the O-acetyltransferase ptmV and ptmI leads to the production of the prenylated form of penijanthine. The FAD-linked oxidoreductase ptmO then converts the prenylated form of penijanthine into PC-M5 which is in turn transformed into PC-M4 by the aromatic dimethylallyltransferase ptmE. Five sequential oxidative transformations performed by the cytochrome P450 monooxygenases ptmK, ptmU, ptmL, ptmN and ptmJ yield the various penitrem compounds. PtmK, ptmU and ptmM are involved in the formation of the key bicyclic ring of penitrem C via the formation of the intermediates secopenitrem D and penitrem D. PtmL catalyzes the epoxidation of penitrem D and C to yield penitrem B and F, respectively. PtmJ catalyzes the last benzylic hydroxylation to convert penitrem B to prenitrem E and penitrem F to penitrem A. This chain is Cytochrome P450 monooxygenase ptmU, found in Penicillium ochrochloron.